The following is a 545-amino-acid chain: Carboxypeptidase Y homolog A (545 aa).

Positions 1-18 are cleaved as a signal peptide; sequence MKSSLALALLVGGAIASG. The propeptide occupies 19-125; it reads PQQQVLREPV…RLDTYDLRVK (107 aa). 5 disulfides stabilise this stretch: cysteine 179-cysteine 418, cysteine 313-cysteine 327, cysteine 337-cysteine 360, cysteine 344-cysteine 353, and cysteine 382-cysteine 388. Residue asparagine 210 is glycosylated (N-linked (GlcNAc...) asparagine). The active site involves serine 266. Residue aspartate 457 is part of the active site. N-linked (GlcNAc...) asparagine glycans are attached at residues asparagine 487 and asparagine 507. The active site involves histidine 518.

The protein belongs to the peptidase S10 family.

The protein resides in the vacuole. The enzyme catalyses Release of a C-terminal amino acid with broad specificity.. Vacuolar carboxypeptidase involved in degradation of small peptides. Digests preferentially peptides containing an aliphatic or hydrophobic residue in P1' position, as well as methionine, leucine or phenylalanine in P1 position of ester substrate. The sequence is that of Carboxypeptidase Y homolog A (CPYA) from Ajellomyces capsulatus (strain NAm1 / WU24) (Darling's disease fungus).